We begin with the raw amino-acid sequence, 265 residues long: Exosome complex component Rrp4 (265 aa).

The S1 motif domain maps to 65 to 137; sequence GDNVIGKIVD…EVNNIDLTTK (73 aa). The region spanning 147–205 is the KH domain; that stretch reads KGGQIVKITPSRVPRVIGRGGSMINMIKKLTMTRIIVGQNGWIWVNGKNEALEKLAIEA. Residues 241-254 are compositionally biased toward acidic residues; sequence EIPELEEEPQEETE. Residues 241-265 are disordered; the sequence is EIPELEEEPQEETEVNNNDGETRRT.

The protein belongs to the RRP4 family. As to quaternary structure, component of the archaeal exosome complex. Forms a trimer of Rrp4 and/or Csl4 subunits. The trimer associates with a hexameric ring-like arrangement composed of 3 Rrp41-Rrp42 heterodimers.

The protein resides in the cytoplasm. Functionally, non-catalytic component of the exosome, which is a complex involved in RNA degradation. Increases the RNA binding and the efficiency of RNA degradation. Confers strong poly(A) specificity to the exosome. The protein is Exosome complex component Rrp4 of Pyrococcus horikoshii (strain ATCC 700860 / DSM 12428 / JCM 9974 / NBRC 100139 / OT-3).